The chain runs to 367 residues: Cyclin-Y-like protein 1 (367 aa).

Phosphoserine occurs at positions 73, 111, and 118. The Cyclin N-terminal domain occupies 186–291; the sequence is EYFKHDPEHK…FLELLQFNIN (106 aa). A Phosphoserine modification is found at serine 352.

It belongs to the cyclin family. Cyclin Y subfamily. Interacts with CDK16; this interaction mutually increases the stability of CDK16 and CCNYL1 and increases the kinase activity of CDK16. As to expression, highly expressed in the testis. Largely restricted to germ cells in the testis.

It is found in the cell membrane. Functionally, key regulator of Wnt signaling implicated in various biological processes including male fertility, embryonic neurogenesis and cortex development. Activates the cyclin-dependent kinase CDK16, and promotes sperm maturation. The protein is Cyclin-Y-like protein 1 of Mus musculus (Mouse).